We begin with the raw amino-acid sequence, 119 residues long: Beta-2-microglobulin (119 aa).

The signal sequence occupies residues 1 to 20 (MSPSVALAVLALLSLSGLEA). The 90-residue stretch at 25 to 114 (PKIQVYSRHP…VTLSGPRTVK (90 aa)) folds into the Ig-like C1-type domain. Cys-45 and Cys-100 are disulfide-bonded.

The protein belongs to the beta-2-microglobulin family. Heterodimer of an alpha chain and a beta chain. Beta-2-microglobulin is the beta-chain of major histocompatibility complex class I molecules.

Its subcellular location is the secreted. Functionally, component of the class I major histocompatibility complex (MHC). Involved in the presentation of peptide antigens to the immune system. This is Beta-2-microglobulin (B2M) from Macaca fascicularis (Crab-eating macaque).